The chain runs to 289 residues: Energy-coupling factor transporter ATP-binding protein EcfA2 (289 aa).

One can recognise an ABC transporter domain in the interval 3-246 (IQAKKLNYTY…PEWLKNHHLN (244 aa)). 40 to 47 (GHTGSGKS) contacts ATP.

Belongs to the ABC transporter superfamily. Energy-coupling factor EcfA family. Forms a stable energy-coupling factor (ECF) transporter complex composed of 2 membrane-embedded substrate-binding proteins (S component), 2 ATP-binding proteins (A component) and 2 transmembrane proteins (T component).

The protein resides in the cell membrane. ATP-binding (A) component of a common energy-coupling factor (ECF) ABC-transporter complex. Unlike classic ABC transporters this ECF transporter provides the energy necessary to transport a number of different substrates. The polypeptide is Energy-coupling factor transporter ATP-binding protein EcfA2 (Ligilactobacillus salivarius (strain UCC118) (Lactobacillus salivarius)).